Reading from the N-terminus, the 510-residue chain is 2,3-bisphosphoglycerate-independent phosphoglycerate mutase (510 aa).

Mn(2+)-binding residues include D11 and S61. S61 serves as the catalytic Phosphoserine intermediate. Substrate is bound by residues H124, 154–155 (RD), R185, R191, 260–263 (RPDR), and K333. D398, H402, D439, H440, and H457 together coordinate Mn(2+).

The protein belongs to the BPG-independent phosphoglycerate mutase family. Monomer. Mn(2+) serves as cofactor.

The catalysed reaction is (2R)-2-phosphoglycerate = (2R)-3-phosphoglycerate. It functions in the pathway carbohydrate degradation; glycolysis; pyruvate from D-glyceraldehyde 3-phosphate: step 3/5. Its function is as follows. Catalyzes the interconversion of 2-phosphoglycerate and 3-phosphoglycerate. This chain is 2,3-bisphosphoglycerate-independent phosphoglycerate mutase, found in Mycoplasma mobile (strain ATCC 43663 / 163K / NCTC 11711) (Mesomycoplasma mobile).